The following is a 68-amino-acid chain: MAPAAAPSSLAVRASSPAATPTSYGVFCKGLSRTLLAFFELAWQLRMNFPYFYVAGSVILNIRLQVHI.

A disordered region spans residues Met1 to Pro21.

This is Small integral membrane protein 10-like protein 1 from Homo sapiens (Human).